Consider the following 724-residue polypeptide: Degenerin mec-10 (724 aa).

Residues 1–15 are compositionally biased toward polar residues; that stretch reads MNRNPRMSKFQPNPR. Positions 1–22 are disordered; the sequence is MNRNPRMSKFQPNPRSRSRFQD. The Cytoplasmic portion of the chain corresponds to 1–122; sequence MNRNPRMSKF…GQAPNSLYRA (122 aa). The helical transmembrane segment at 123–143 threads the bilayer; it reads AWVFLLLICAIQFINQAVAVI. Residues 144-684 lie on the Extracellular side of the membrane; it reads QKYQKMDKIT…FGGHLGLWSG (541 aa). A disordered region spans residues 229 to 265; the sequence is KRGAGEKGTFEPANSACECDEEDGSNECEERSTEKPS. The span at 246-255 shows a compositional bias: acidic residues; it reads ECDEEDGSNE. The span at 256-265 shows a compositional bias: basic and acidic residues; it reads CEERSTEKPS. N-linked (GlcNAc...) asparagine glycans are attached at residues Asn-293, Asn-369, Asn-463, Asn-605, and Asn-624. Residues 685 to 705 form a helical membrane-spanning segment; that stretch reads VSVMTCCEFVCLAFELIYMAI. The Cytoplasmic portion of the chain corresponds to 706–724; sequence AHHINQQRIRRRENAANEY.

Belongs to the amiloride-sensitive sodium channel (TC 1.A.6) family. Component of a non-voltage-gated amiloride-sensitive cation channel complex (also called the degenerin channel complex) composed of at least the mec-2, mec-4, mec-6 and mec-10 subunits; the complex mediates mechanotransduction in touch cells. Interacts with mec-4 and mec-6.

It localises to the cell membrane. Functionally, subunit of an amiloride-sensitive cation channel (degenerin channel complex) permeable for sodium, potassium, lithium and N-methylglucamine, and required for mechanosensory transduction (touch sensitivity). Negatively regulates the turning step of male mating behavior. The chain is Degenerin mec-10 from Caenorhabditis elegans.